The sequence spans 999 residues: Desmoglein-3 (999 aa).

An N-terminal signal peptide occupies residues 1–23 (MMGLFPRTTGALAIFVVVILVHG). Positions 24–49 (ELRIETKGQYDEEEMTMQQAKRRQKR) are excised as a propeptide. 4 consecutive Cadherin domains span residues 50 to 158 (EWVK…PVFS), 159 to 268 (QQIF…PMFR), 269 to 383 (DSQY…GIAF), and 386 to 499 (ASKT…VLEK). The Extracellular segment spans residues 50 to 615 (EWVKFAKPCR…TRYGRPHSGR (566 aa)). Residues N110 and N180 are each glycosylated (N-linked (GlcNAc...) asparagine). N-linked (GlcNAc...) asparagine glycosylation is found at N459 and N545. Residues 616–640 (LGPAAIGLLLLGLLLLLLAPLLLLT) form a helical membrane-spanning segment. The Cytoplasmic segment spans residues 641–999 (CDCGAGSTGG…CTEDPCSRLI (359 aa)). Positions 642–714 (DCGAGSTGGV…NTYARGTAVE (73 aa)) are required for interaction with CTNND1 and localization at cell-cell junctions. 2 Desmoglein repeat repeats span residues 910–935 (LSTS…LVTE) and 936–966 (TYSA…ERVI).

In terms of assembly, homodimer. Part of a complex that contains DSG3, PKP1, YAP1 and YWHAG; the complex is required for localization of DSG3 and YAP1 to the cell membrane in keratinocytes. Interacts with PKP2. Interacts with CTNND1; the interaction facilitates DSG3 localization and retention at cell-cell junctions. Interacts with CDH1; the interaction is required for CDH1 localization to developing adherens junctions. Interacts with RAC1; the interaction is required for DSG3 translocation to cell-cell junctions, organization of cortical F-actin bundles and actin anchoring at cell-cell junctions. Interacts with DSC3; the interaction may limit the interaction of DSC3 with p38MAPK family members and therefore repress p38MAPK signaling activation. In terms of tissue distribution, expressed throughout the basal and spinous layer of the epidermis with weak expression in the granular layer (at protein level). Expressed in skin and mucosa (at protein level). Expressed in the basal layer of the outer root sheath of the telogen hair club, specifically at the cell membrane between the apex of the cells and the surrounding hair club (at protein level). Expression is less abundant between the lateral margins of the outer root sheath basal cells (at protein level). Also expressed in the tongue, tonsil and esophagus.

The protein resides in the cell membrane. Its subcellular location is the cell junction. The protein localises to the desmosome. It is found in the cytoplasm. It localises to the tight junction. Its function is as follows. A component of desmosome cell-cell junctions which are required for positive regulation of cellular adhesion. Required for adherens and desmosome junction assembly in response to mechanical force in keratinocytes. Required for desmosome-mediated cell-cell adhesion of cells surrounding the telogen hair club and the basal layer of the outer root sheath epithelium, consequently is essential for the anchoring of telogen hairs in the hair follicle. Required for the maintenance of the epithelial barrier via promoting desmosome-mediated intercellular attachment of suprabasal epithelium to basal cells. May play a role in the protein stability of the desmosome plaque components DSP, JUP, PKP1, PKP2 and PKP3. Required for YAP1 localization at the plasma membrane in keratinocytes in response to mechanical strain, via the formation of an interaction complex composed of DSG3, PKP1 and YWHAG. May also be involved in the positive regulation of YAP1 target gene transcription and as a result cell proliferation. Positively regulates cellular contractility and cell junction formation via organization of cortical F-actin bundles and anchoring of actin to tight junctions, in conjunction with RAC1. The cytoplasmic pool of DSG3 is required for the localization of CDH1 and CTNNB1 at developing adherens junctions, potentially via modulation of SRC activity. Inhibits keratinocyte migration via suppression of p38MAPK signaling, may therefore play a role in moderating wound healing. The polypeptide is Desmoglein-3 (Homo sapiens (Human)).